The chain runs to 84 residues: Cell division topological specificity factor (84 aa).

It belongs to the MinE family.

In terms of biological role, prevents the cell division inhibition by proteins MinC and MinD at internal division sites while permitting inhibition at polar sites. This ensures cell division at the proper site by restricting the formation of a division septum at the midpoint of the long axis of the cell. The sequence is that of Cell division topological specificity factor from Ralstonia pickettii (strain 12J).